The sequence spans 394 residues: Sugar efflux transporter C (394 aa).

Residues 1-10 are Periplasmic-facing; sequence MQKTATTPSK. The helical transmembrane segment at 11-31 threads the bilayer; the sequence is ILDLTAAAFLLVAFLTGIAGA. The Cytoplasmic segment spans residues 32–49; that stretch reads LQTPTLSIFLADELKARP. A helical transmembrane segment spans residues 50–70; the sequence is IMVGFFFTGSAIMGILVSQFL. The Periplasmic portion of the chain corresponds to 71–80; the sequence is ARHSDKQGDR. Residues 81–101 traverse the membrane as a helical segment; that stretch reads KLLILLCCLFGVLACTLFAWN. Topologically, residues 102–104 are cytoplasmic; sequence RNY. Residues 105 to 125 traverse the membrane as a helical segment; that stretch reads FILLSTGVLLSSFASTANPQM. Over 126 to 150 the chain is Periplasmic; the sequence is FALAREHADRTGRETVMFSTFLRAQ. A helical transmembrane segment spans residues 151–171; it reads ISLAWVIGPPLAYELAMGFSF. Position 172 (Lys-172) is a topological domain, cytoplasmic. The helical transmembrane segment at 173-193 threads the bilayer; that stretch reads VMYLTAAIAFVVCGLIVWLFL. Over 194–224 the chain is Periplasmic; the sequence is PSIQRNIPVVTQPVEILPSTHRKRDTRLLFV. The helical transmembrane segment at 225 to 245 threads the bilayer; the sequence is VCSMMWAANNLYMINMPLFII. At 246–253 the chain is on the cytoplasmic side; that stretch reads DELHLTDK. A helical membrane pass occupies residues 254–274; it reads LTGEMIGIAAGLEIPMMLIAG. The Periplasmic portion of the chain corresponds to 275–283; that stretch reads YYMKRIGKR. Residues 284–304 form a helical membrane-spanning segment; that stretch reads LLMLIAIVSGMCFYASVLMAT. Over 305-310 the chain is Cytoplasmic; the sequence is TPAVEL. Residues 311–331 traverse the membrane as a helical segment; the sequence is ELQILNAIFLGILCGIGMLYF. The Periplasmic portion of the chain corresponds to 332–370; sequence QDLMPEKIGSATTLYANTSRVGWIIAGSVDGIMVEIWSY. Residues 371–391 form a helical membrane-spanning segment; the sequence is HALFWLAIGMLGIAMICLLFI. Over 392 to 394 the chain is Cytoplasmic; that stretch reads KDI.

The protein belongs to the major facilitator superfamily. Set transporter family.

The protein localises to the cell inner membrane. Involved in the efflux of sugars. The physiological role may be the detoxification of non-metabolizable sugar analogs. This Escherichia coli (strain K12) protein is Sugar efflux transporter C (setC).